A 201-amino-acid chain; its full sequence is ADP-ribosylation factor-related protein 1 (201 aa).

An N-acetylmethionine modification is found at methionine 1. Residues 24–31 (GLDNAGKT), 75–79 (DLGGQ), and 134–137 (NKQD) each bind GTP.

The protein belongs to the small GTPase superfamily. Arf family. As to quaternary structure, interacts with SYS1.

It is found in the golgi apparatus. Its subcellular location is the trans-Golgi network. Trans-Golgi-associated GTPase that regulates protein sorting. Controls the targeting of ARL1 and its effector to the trans-Golgi. Required for the lipidation of chylomicrons in the intestine and required for VLDL lipidation in the liver. In Mus musculus (Mouse), this protein is ADP-ribosylation factor-related protein 1 (Arfrp1).